Reading from the N-terminus, the 301-residue chain is Methionyl-tRNA formyltransferase (301 aa).

110–113 (SLLP) serves as a coordination point for (6S)-5,6,7,8-tetrahydrofolate.

Belongs to the Fmt family.

It carries out the reaction L-methionyl-tRNA(fMet) + (6R)-10-formyltetrahydrofolate = N-formyl-L-methionyl-tRNA(fMet) + (6S)-5,6,7,8-tetrahydrofolate + H(+). Attaches a formyl group to the free amino group of methionyl-tRNA(fMet). The formyl group appears to play a dual role in the initiator identity of N-formylmethionyl-tRNA by promoting its recognition by IF2 and preventing the misappropriation of this tRNA by the elongation apparatus. The protein is Methionyl-tRNA formyltransferase of Acidiphilium cryptum (strain JF-5).